We begin with the raw amino-acid sequence, 622 residues long: WD repeat-containing protein 70 (622 aa).

Residues 36-55 (RTAVERSKQTLEAREKEEQL) show a composition bias toward basic and acidic residues. Residues 36-141 (RTAVERSKQT…DNPVKDIPDS (106 aa)) form a disordered region. Low complexity predominate over residues 67–84 (SSSGQKKTKASGSSSGSE). The segment covering 120–132 (SDDEDDEEHEDDD) has biased composition (acidic residues). WD repeat units lie at residues 148-187 (HGTK…ASLQ), 195-236 (CECH…ECVK), 249-289 (GHTA…KHKG), 298-337 (GKPV…HTKF), 344-383 (TPGT…NPLN), 387-434 (GLEN…KIYE), and 437-476 (VTEA…QRGA). Residues 508–533 (REPRQRSTRKQLEKDRLDPVKSHKPE) are compositionally biased toward basic and acidic residues. 2 disordered regions span residues 508–549 (REPR…GTHG) and 602–622 (AEVD…KRKI). Residues 539-549 (PGRGGRVGTHG) are compositionally biased toward gly residues. Residues 604-614 (VDSDEEEPDNE) show a composition bias toward acidic residues.

Belongs to the WD repeat GAD-1 family.

This chain is WD repeat-containing protein 70 (wdr70), found in Xenopus laevis (African clawed frog).